Consider the following 649-residue polypeptide: Acetyl-coenzyme A synthetase (649 aa).

CoA is bound by residues 189–192 (RGGK), Thr-311, and Asn-335. ATP contacts are provided by residues 387-389 (GEP), 411-416 (DTWWQT), Asp-500, and Arg-515. Ser-523 is a binding site for CoA. Arg-526 contributes to the ATP binding site. Mg(2+)-binding residues include Val-537, His-539, and Val-542. Arg-584 serves as a coordination point for CoA. Lys-609 carries the post-translational modification N6-acetyllysine.

It belongs to the ATP-dependent AMP-binding enzyme family. It depends on Mg(2+) as a cofactor. In terms of processing, acetylated. Deacetylation by the SIR2-homolog deacetylase activates the enzyme.

It catalyses the reaction acetate + ATP + CoA = acetyl-CoA + AMP + diphosphate. In terms of biological role, catalyzes the conversion of acetate into acetyl-CoA (AcCoA), an essential intermediate at the junction of anabolic and catabolic pathways. AcsA undergoes a two-step reaction. In the first half reaction, AcsA combines acetate with ATP to form acetyl-adenylate (AcAMP) intermediate. In the second half reaction, it can then transfer the acetyl group from AcAMP to the sulfhydryl group of CoA, forming the product AcCoA. In Rhizobium meliloti (strain 1021) (Ensifer meliloti), this protein is Acetyl-coenzyme A synthetase.